A 394-amino-acid chain; its full sequence is Cystathionine gamma-lyase (394 aa).

The interval 37–56 (KQSSPANPIGTYEYSRSQNP) is disordered. Residues R52, Y104, and R109 each contribute to the substrate site. K204 bears the N6-(pyridoxal phosphate)lysine mark. Substrate is bound at residue E334. Position 362 is a phosphoserine (S362).

Belongs to the trans-sulfuration enzymes family. In terms of assembly, homotetramer. It depends on pyridoxal 5'-phosphate as a cofactor.

The protein resides in the cytoplasm. It carries out the reaction L,L-cystathionine + H2O = 2-oxobutanoate + L-cysteine + NH4(+). The protein operates within amino-acid biosynthesis; L-cysteine biosynthesis; L-cysteine from L-homocysteine and L-serine: step 2/2. Functionally, catalyzes the production of cysteine from cystathionine in the reverse transsulfuration pathway for the biosynthesis of sulfur-containing amino acids cysteine and methionine. In this pathway, homocysteine sulfur is converted to cysteine sulfur. Also has cystathionine beta-lyase and cystathionine gamma-synthase activities in vitro. Cystathionine beta-lyase may be physiological, while cystathionine gamma-synthase activity is not, as the required substrate O-succinyl-L-homoserine(OSH) does not occur naturally in S.cerevisiae. The protein is Cystathionine gamma-lyase of Saccharomyces cerevisiae (strain ATCC 204508 / S288c) (Baker's yeast).